Consider the following 458-residue polypeptide: tRNA modification GTPase MnmE (458 aa).

(6S)-5-formyl-5,6,7,8-tetrahydrofolate is bound by residues arginine 22, glutamate 85, and arginine 124. The region spanning 220-379 (GLATAIIGRP…LEEAISRLFF (160 aa)) is the TrmE-type G domain. Asparagine 230 is a binding site for K(+). Residues 230–235 (NVGKSS), 249–255 (TDIPGTT), and 274–277 (DTAG) each bind GTP. Mg(2+) is bound at residue serine 234. Positions 249, 251, and 254 each coordinate K(+). Threonine 255 is a binding site for Mg(2+). Lysine 458 contacts (6S)-5-formyl-5,6,7,8-tetrahydrofolate.

This sequence belongs to the TRAFAC class TrmE-Era-EngA-EngB-Septin-like GTPase superfamily. TrmE GTPase family. As to quaternary structure, homodimer. Heterotetramer of two MnmE and two MnmG subunits. It depends on K(+) as a cofactor.

It is found in the cytoplasm. Its function is as follows. Exhibits a very high intrinsic GTPase hydrolysis rate. Involved in the addition of a carboxymethylaminomethyl (cmnm) group at the wobble position (U34) of certain tRNAs, forming tRNA-cmnm(5)s(2)U34. The protein is tRNA modification GTPase MnmE of Shouchella clausii (strain KSM-K16) (Alkalihalobacillus clausii).